The primary structure comprises 212 residues: 2,3-bisphosphoglycerate-dependent phosphoglycerate mutase (212 aa).

Substrate-binding positions include 9–16 (RHGQSEWN), 22–23 (TG), Arg61, 88–91 (ERDY), Lys99, 115–116 (RR), and 159–160 (GN). His10 acts as the Tele-phosphohistidine intermediate in catalysis. Glu88 serves as the catalytic Proton donor/acceptor.

This sequence belongs to the phosphoglycerate mutase family. BPG-dependent PGAM subfamily. Homodimer.

It catalyses the reaction (2R)-2-phosphoglycerate = (2R)-3-phosphoglycerate. It participates in carbohydrate degradation; glycolysis; pyruvate from D-glyceraldehyde 3-phosphate: step 3/5. Functionally, catalyzes the interconversion of 2-phosphoglycerate and 3-phosphoglycerate. In Methylorubrum populi (strain ATCC BAA-705 / NCIMB 13946 / BJ001) (Methylobacterium populi), this protein is 2,3-bisphosphoglycerate-dependent phosphoglycerate mutase.